The following is a 130-amino-acid chain: Small ribosomal subunit protein uS8 (130 aa).

This sequence belongs to the universal ribosomal protein uS8 family. In terms of assembly, part of the 30S ribosomal subunit. Contacts proteins S5 and S12.

Functionally, one of the primary rRNA binding proteins, it binds directly to 16S rRNA central domain where it helps coordinate assembly of the platform of the 30S subunit. In Alteromonas mediterranea (strain DSM 17117 / CIP 110805 / LMG 28347 / Deep ecotype), this protein is Small ribosomal subunit protein uS8.